A 152-amino-acid polypeptide reads, in one-letter code: Ribosome maturation factor RimP (152 aa).

Belongs to the RimP family.

The protein localises to the cytoplasm. Its function is as follows. Required for maturation of 30S ribosomal subunits. The sequence is that of Ribosome maturation factor RimP from Aeromonas hydrophila subsp. hydrophila (strain ATCC 7966 / DSM 30187 / BCRC 13018 / CCUG 14551 / JCM 1027 / KCTC 2358 / NCIMB 9240 / NCTC 8049).